A 587-amino-acid polypeptide reads, in one-letter code: 2-succinyl-5-enolpyruvyl-6-hydroxy-3-cyclohexene-1-carboxylate synthase (587 aa).

This sequence belongs to the TPP enzyme family. MenD subfamily. As to quaternary structure, homodimer. Mg(2+) is required as a cofactor. It depends on Mn(2+) as a cofactor. The cofactor is thiamine diphosphate.

It carries out the reaction isochorismate + 2-oxoglutarate + H(+) = 5-enolpyruvoyl-6-hydroxy-2-succinyl-cyclohex-3-ene-1-carboxylate + CO2. The protein operates within quinol/quinone metabolism; 1,4-dihydroxy-2-naphthoate biosynthesis; 1,4-dihydroxy-2-naphthoate from chorismate: step 2/7. Its pathway is cofactor biosynthesis; phylloquinone biosynthesis. Functionally, catalyzes the thiamine diphosphate-dependent decarboxylation of 2-oxoglutarate and the subsequent addition of the resulting succinic semialdehyde-thiamine pyrophosphate anion to isochorismate to yield 2-succinyl-5-enolpyruvyl-6-hydroxy-3-cyclohexene-1-carboxylate (SEPHCHC). The chain is 2-succinyl-5-enolpyruvyl-6-hydroxy-3-cyclohexene-1-carboxylate synthase from Prochlorococcus marinus (strain MIT 9301).